We begin with the raw amino-acid sequence, 140 residues long: Ergosterol biosynthetic protein 28 homolog (140 aa).

A run of 4 helical transmembrane segments spans residues 4–24 (FLNV…GNTL), 52–72 (TFGI…IDIH), 79–99 (ITLW…FVYG), and 105–125 (IGVL…LVGL).

The protein belongs to the ERG28 family. Ubiquitous; strongly expressed in testis and some cancer cell lines.

Its subcellular location is the endoplasmic reticulum membrane. This chain is Ergosterol biosynthetic protein 28 homolog, found in Homo sapiens (Human).